A 502-amino-acid chain; its full sequence is Probable cytosol aminopeptidase (502 aa).

2 residues coordinate Mn(2+): lysine 275 and aspartate 280. Lysine 287 is a catalytic residue. Mn(2+) is bound by residues aspartate 298, aspartate 357, and glutamate 359. Residue arginine 361 is part of the active site.

Belongs to the peptidase M17 family. Mn(2+) serves as cofactor.

It is found in the cytoplasm. It catalyses the reaction Release of an N-terminal amino acid, Xaa-|-Yaa-, in which Xaa is preferably Leu, but may be other amino acids including Pro although not Arg or Lys, and Yaa may be Pro. Amino acid amides and methyl esters are also readily hydrolyzed, but rates on arylamides are exceedingly low.. The enzyme catalyses Release of an N-terminal amino acid, preferentially leucine, but not glutamic or aspartic acids.. Presumably involved in the processing and regular turnover of intracellular proteins. Catalyzes the removal of unsubstituted N-terminal amino acids from various peptides. This is Probable cytosol aminopeptidase from Ralstonia pickettii (strain 12J).